We begin with the raw amino-acid sequence, 1158 residues long: Protein transport protein Sec31B (1158 aa).

WD repeat units lie at residues Lys4–Glu47, Val65–Lys110, Lys119–Thr159, Asn166–Lys206, Ser209–Lys254, Ser258–Lys298, and Thr301–Gln341. The stretch at Ser376–Ser407 is one WD 8; interaction with SEC13 repeat. Disordered stretches follow at residues Leu485–Lys520, Thr797–His843, and Gly968–Gln1010. Over residues Gln822–Ser840 the composition is skewed to low complexity.

This sequence belongs to the WD repeat SEC31 family. As to quaternary structure, COPII is composed of at least 5 proteins: the SEC23/24 complex, the SEC13/31 complex and SAR1. SEC13 and SEC31 make a 2:2 tetramer that forms the edge element of the COPII outer coat. The tetramer self-assembles in multiple copies to form the complete polyhedral cage. Interacts (via WD 8) with SEC13. Interacts with SEC31A. Post-translationally, monoubiquitinated by the BCR(KLHL12) E3 ubiquitin ligase complex, leading to regulate the size of COPII coats.

It localises to the cytoplasm. The protein localises to the cytoplasmic vesicle. It is found in the COPII-coated vesicle membrane. Its subcellular location is the endoplasmic reticulum membrane. Its function is as follows. As a component of the coat protein complex II (COPII), may function in vesicle budding and cargo export from the endoplasmic reticulum. The sequence is that of Protein transport protein Sec31B (Sec31b) from Mus musculus (Mouse).